Here is a 532-residue protein sequence, read N- to C-terminus: Nucleobase-ascorbate transporter 6 (532 aa).

The interval Met1–Pro24 is disordered. Residues Lys10–Lys20 are compositionally biased toward basic and acidic residues. The next 12 helical transmembrane spans lie at Ala39 to Thr59, Val75 to Thr95, Leu97 to Ser117, Thr137 to Trp157, Phe163 to Phe185, Ile192 to Val212, Phe223 to Gly243, Phe289 to Val309, Val361 to Gly381, Ala392 to Leu414, Phe426 to Thr446, and Asp463 to Leu483.

Belongs to the nucleobase:cation symporter-2 (NCS2) (TC 2.A.40) family. As to expression, expressed in the apical region of cotyledons 4 days after imbibition (DAI). Expressed in the whole vasculature at 12 DAI. Expressed in the root central cylinder and lateral root primordia. Expressed in the vasculature of sepals, filaments, carpels and developing siliques.

The protein localises to the membrane. This chain is Nucleobase-ascorbate transporter 6 (NAT6), found in Arabidopsis thaliana (Mouse-ear cress).